The primary structure comprises 150 residues: Large ribosomal subunit protein bL9 (150 aa).

This sequence belongs to the bacterial ribosomal protein bL9 family.

In terms of biological role, binds to the 23S rRNA. The polypeptide is Large ribosomal subunit protein bL9 (Ralstonia nicotianae (strain ATCC BAA-1114 / GMI1000) (Ralstonia solanacearum)).